The following is a 102-amino-acid chain: Small ribosomal subunit protein uS10 (102 aa).

It belongs to the universal ribosomal protein uS10 family. Part of the 30S ribosomal subunit.

Functionally, involved in the binding of tRNA to the ribosomes. This is Small ribosomal subunit protein uS10 from Methanococcus maripaludis (strain C5 / ATCC BAA-1333).